The following is a 423-amino-acid chain: F-box/LRR-repeat protein 2 (423 aa).

Positions 9–55 constitute an F-box domain; that stretch reads GLINKKLPKELLLRIFSFLDIVTLCRCAQISKAWNILALDGSNWQRV. LRR repeat units lie at residues 61–87, 88–113, 114–139, 140–165, 166–191, 192–217, 218–243, 244–269, 270–295, 296–321, 322–350, 351–375, and 376–401; these read QTDV…SLRG, CIGV…NLNG, CTKI…DLTS, CVSV…NLSW, CDQI…LLRG, CTQL…NLQS, CSRI…CLSG, CSNL…EAAR, CSHL…DLEE, CVLI…SLSH, CELI…ELDN, CLLV…ELYD, and CQQV…AYFA. Positions 80-90 are interaction with Calmodulin; the sequence is LRKLSLRGCIG. A Glycyl lysine isopeptide (Lys-Gly) (interchain with G-Cter in ubiquitin) cross-link involves residue Lys-201. Phosphothreonine; by GSK3-beta is present on Thr-404. A lipid anchor (S-geranylgeranyl cysteine) is attached at Cys-420. Positions 420 to 423 match the CAAX motif motif; it reads CVIL.

As to quaternary structure, part of the SCF (SKP1-CUL1-F-box) E3 ubiquitin-protein ligase complex SCF(FBXL2) composed of CUL1, SKP1, RBX1 and FBXL2. Interacts with calmodulin; may antagonize substrate ubiquitination by SCF(FBXL2). May interact with PIK3R1. Interacts with PTPN13. In terms of processing, phosphorylated by GSK-beta (GSK3B), promoting recognition by FBXO3, leading to its ubiquitination by the SCF(FBXO3) complex. Post-translationally, ubiquitinated at Lys-201 by the SCF(FBXO3) complex in response to lipopolysaccharide (LPS), leading to its degradation by the proteasome.

It localises to the membrane. Its pathway is protein modification; protein ubiquitination. Calcium-activated substrate recognition component of the SCF (SKP1-cullin-F-box protein) E3 ubiquitin-protein ligase complex, SCF(FBXL2), which mediates the ubiquitination and subsequent proteasomal degradation of target proteins. Unlike many F-box proteins, FBXL2 does not seem to target phosphodegron within its substrates but rather calmodulin-binding motifs and is thereby antagonized by calmodulin. This is the case for the cyclins CCND2 and CCND3 which polyubiquitination and subsequent degradation are inhibited by calmodulin. Through CCND2 and CCND3 degradation induces cell-cycle arrest in G(0). SCF(FBXL2) also mediates PIK3R2 ubiquitination and proteasomal degradation thereby regulating phosphatidylinositol 3-kinase signaling and autophagy. PCYT1A monoubiquitination by SCF(FBXL2) and subsequent degradation regulates synthesis of phosphatidylcholine, which is utilized for formation of membranes and of pulmonary surfactant. The SCF(FBXL2) complex acts as a regulator of inflammation by mediating ubiquitination and degradation of TRAF proteins (TRAF1, TRAF2, TRAF3, TRAF4, TRAF5 and TRAF6). The SCF(FBXL2) complex acts as a negative regulator of the NLRP3 inflammasome by mediating ubiquitination and degradation of NLRP3. This is F-box/LRR-repeat protein 2 from Mus musculus (Mouse).